A 327-amino-acid chain; its full sequence is Phenylalanine--tRNA ligase alpha subunit (327 aa).

Position 252 (Glu252) interacts with Mg(2+).

The protein belongs to the class-II aminoacyl-tRNA synthetase family. Phe-tRNA synthetase alpha subunit type 1 subfamily. As to quaternary structure, tetramer of two alpha and two beta subunits. Requires Mg(2+) as cofactor.

It is found in the cytoplasm. It carries out the reaction tRNA(Phe) + L-phenylalanine + ATP = L-phenylalanyl-tRNA(Phe) + AMP + diphosphate + H(+). The chain is Phenylalanine--tRNA ligase alpha subunit from Vibrio parahaemolyticus serotype O3:K6 (strain RIMD 2210633).